Reading from the N-terminus, the 289-residue chain is Cbb3-type cytochrome c oxidase subunit FixP (289 aa).

Topologically, residues 1–33 (MADKHKHVDEVSGVETTGHEWDGIRELNNPLPR) are cytoplasmic. The chain crosses the membrane as a helical span at residues 34 to 56 (WWVYSFYATIIWAIGYAVAYPSW). The Periplasmic portion of the chain corresponds to 57–289 (PMLTEATKGV…VFVHSLGGGE (233 aa)). 2 consecutive Cytochrome c domains span residues 110–198 (FAVS…MSLT) and 205–286 (HLVE…HSLG). Residues cysteine 123, cysteine 126, histidine 127, methionine 175, cysteine 218, cysteine 221, histidine 222, and methionine 263 each coordinate heme c.

The protein belongs to the CcoP / FixP family. In terms of assembly, component of the cbb3-type cytochrome c oxidase at least composed of FixN, FixO, FixQ and FixP. It depends on heme c as a cofactor.

The protein resides in the cell inner membrane. It functions in the pathway energy metabolism; oxidative phosphorylation. C-type cytochrome. Part of the cbb3-type cytochrome c oxidase complex. FixP subunit is required for transferring electrons from donor cytochrome c via its heme groups to FixO subunit. From there, electrons are shuttled to the catalytic binuclear center of FixN subunit where oxygen reduction takes place. The complex also functions as a proton pump. This chain is Cbb3-type cytochrome c oxidase subunit FixP, found in Sinorhizobium medicae (strain WSM419) (Ensifer medicae).